A 137-amino-acid chain; its full sequence is uncharacterized protein (137 aa).

It to E.coli YfdK.

This is an uncharacterized protein from Escherichia coli (strain K12).